The chain runs to 248 residues: uncharacterized protein (248 aa).

Isoleucine 8–valine 32 provides a ligand contact to NADP(+). Serine 143 contacts substrate. The active-site Proton acceptor is the tyrosine 153.

Belongs to the short-chain dehydrogenases/reductases (SDR) family.

This is an uncharacterized protein from Mycobacterium tuberculosis (strain CDC 1551 / Oshkosh).